The sequence spans 40 residues: Photosystem II reaction center protein J (40 aa).

The chain crosses the membrane as a helical span at residues Ile8–Phe28.

Belongs to the PsbJ family. As to quaternary structure, PSII is composed of 1 copy each of membrane proteins PsbA, PsbB, PsbC, PsbD, PsbE, PsbF, PsbH, PsbI, PsbJ, PsbK, PsbL, PsbM, PsbT, PsbX, PsbY, PsbZ, Psb30/Ycf12, at least 3 peripheral proteins of the oxygen-evolving complex and a large number of cofactors. It forms dimeric complexes.

The protein resides in the plastid. The protein localises to the chloroplast thylakoid membrane. Its function is as follows. One of the components of the core complex of photosystem II (PSII). PSII is a light-driven water:plastoquinone oxidoreductase that uses light energy to abstract electrons from H(2)O, generating O(2) and a proton gradient subsequently used for ATP formation. It consists of a core antenna complex that captures photons, and an electron transfer chain that converts photonic excitation into a charge separation. This chain is Photosystem II reaction center protein J, found in Pelargonium hortorum (Common geranium).